We begin with the raw amino-acid sequence, 335 residues long: NAC domain-containing protein 40 (335 aa).

The NAC domain occupies 14-156 (LFPGFRFSPT…ALVVCRLRKN (143 aa)). A DNA-binding region spans residues 112 to 162 (VGTKRTLVFHIGRAPRGERTEWIMHEYCIHGAPQDALVVCRLRKNADFRAS). Over residues 245-254 (PTNPTHQETI) the composition is skewed to polar residues. Residues 245–267 (PTNPTHQETISSESSSKRSKCGI) form a disordered region. The chain crosses the membrane as a helical span at residues 313-333 (VLATTVFLAILFSFFWTVLIA).

Post-translationally, proteolytically cleaved, probably by metalloprotease activity. This cleavage mediates a translocation from the plasma membrane to the nucleus. Expressed in seeds, leaves, roots and inflorescence. Expressed in roots, rosette leaves, cauline leaves, shoot apex, stems and flowers.

It localises to the cell membrane. The protein localises to the nucleus. In terms of biological role, transcriptional activator activated by proteolytic cleavage through regulated intramembrane proteolysis (RIP), probably via metalloprotease activity. Regulates gibberellic acid-mediated salt-responsive repression of seed germination and flowering via FT, thus delaying seed germination under high salinity conditions. This is NAC domain-containing protein 40 from Arabidopsis thaliana (Mouse-ear cress).